The chain runs to 284 residues: Bifunctional protein FolD 2 (284 aa).

NADP(+) contacts are provided by residues 166-168 and Ile232; that span reads GAS.

Belongs to the tetrahydrofolate dehydrogenase/cyclohydrolase family. Homodimer.

It catalyses the reaction (6R)-5,10-methylene-5,6,7,8-tetrahydrofolate + NADP(+) = (6R)-5,10-methenyltetrahydrofolate + NADPH. It carries out the reaction (6R)-5,10-methenyltetrahydrofolate + H2O = (6R)-10-formyltetrahydrofolate + H(+). It functions in the pathway one-carbon metabolism; tetrahydrofolate interconversion. Catalyzes the oxidation of 5,10-methylenetetrahydrofolate to 5,10-methenyltetrahydrofolate and then the hydrolysis of 5,10-methenyltetrahydrofolate to 10-formyltetrahydrofolate. In Colwellia psychrerythraea (strain 34H / ATCC BAA-681) (Vibrio psychroerythus), this protein is Bifunctional protein FolD 2.